The chain runs to 1115 residues: Lateral signaling target protein 2 homolog (1115 aa).

Disordered regions lie at residues 308-488 (PLGS…DSDS), 545-586 (SEDD…PSTS), 600-742 (RLPS…SLSD), and 879-1027 (VQSS…PDGK). Residues 322-361 (NNSSSTTNTSNNNNNNTNNNNSSSGSDCTNNDKTGTTTNT) are compositionally biased toward low complexity. The span at 363–373 (KPVERLVDHRN) shows a compositional bias: basic and acidic residues. Composition is skewed to low complexity over residues 374–417 (NNTT…TPTA) and 425–444 (PSHS…NSPA). The span at 449-488 (YDDDDEDDDDDDVHADVEEDEDESGILDSDEHDLNDDSDS) shows a compositional bias: acidic residues. Low complexity-rich tracts occupy residues 558-577 (QQQQ…QQQQ) and 600-614 (RLPS…SSNN). A phosphoserine mark is found at Ser-603 and Ser-604. The span at 615 to 628 (QQMTIKSPSEQTTT) shows a compositional bias: polar residues. A compositionally biased stretch (basic residues) spans 632-655 (SNRHRHHSHHHHHHHHSHHHHHHQ). Residues 658–676 (AAVAVAAAQDEQHNNNQPH) show a composition bias toward low complexity. The segment covering 677 to 706 (SHSHSSSHHHHHNHQSHSHPHRANRSTRKR) has biased composition (basic residues). Low complexity-rich tracts occupy residues 714 to 726 (TITT…GGEQ), 733 to 742 (DSSTASSLSD), and 881 to 901 (SSNS…AARS). Ser-908 carries the phosphoserine modification. Composition is skewed to low complexity over residues 921-975 (QQQQ…SPVS) and 988-1020 (TTTT…MSPP). Residues 1025–1085 (DGKAPRCMSC…VCRECFMREV (61 aa)) form an FYVE-type zinc finger. Cys-1031, Cys-1034, Cys-1047, Cys-1050, Cys-1055, Cys-1058, Cys-1077, and Cys-1080 together coordinate Zn(2+). Positions 1088-1115 (SHSHGQSQSQIHSPTQQAGGRPQAASAS) are disordered. Over residues 1090-1100 (SHGQSQSQIHS) the composition is skewed to low complexity.

The protein belongs to the lst-2 family.

Its function is as follows. Negative regulator of epidermal growth factor receptor (EGFR) signaling. The polypeptide is Lateral signaling target protein 2 homolog (Drosophila grimshawi (Hawaiian fruit fly)).